Consider the following 124-residue polypeptide: MPEKDWIGEFGPSKFKSPIDKLNQLLPESNDPSILYETSQHLLSEFDKTLNDSLRVLNQQINQVSEVLPRLPTMISALDRESKRLFESCEKMDPEPSALMPLQELEKIRSNIQLTISQIDNLTP.

It localises to the cytoplasm. The protein localises to the nucleus. This is an uncharacterized protein from Schizosaccharomyces pombe (strain 972 / ATCC 24843) (Fission yeast).